The chain runs to 608 residues: DNA mismatch repair protein MutL (608 aa).

This sequence belongs to the DNA mismatch repair MutL/HexB family.

This protein is involved in the repair of mismatches in DNA. It is required for dam-dependent methyl-directed DNA mismatch repair. May act as a 'molecular matchmaker', a protein that promotes the formation of a stable complex between two or more DNA-binding proteins in an ATP-dependent manner without itself being part of a final effector complex. In Elusimicrobium minutum (strain Pei191), this protein is DNA mismatch repair protein MutL.